A 772-amino-acid chain; its full sequence is DNA ligase (772 aa).

Residues 80 to 84, 130 to 131, and Glu160 contribute to the NAD(+) site; these read DAEYD and SL. Lys162 acts as the N6-AMP-lysine intermediate in catalysis. NAD(+)-binding residues include Arg183, Glu220, Lys336, and Lys360. Zn(2+)-binding residues include Cys454, Cys457, Cys473, and Cys479. Residues 685–772 form the BRCT domain; it reads APEQTLEGLT…NGPQGITTIG (88 aa).

It belongs to the NAD-dependent DNA ligase family. LigA subfamily. It depends on Mg(2+) as a cofactor. Requires Mn(2+) as cofactor.

The catalysed reaction is NAD(+) + (deoxyribonucleotide)n-3'-hydroxyl + 5'-phospho-(deoxyribonucleotide)m = (deoxyribonucleotide)n+m + AMP + beta-nicotinamide D-nucleotide.. DNA ligase that catalyzes the formation of phosphodiester linkages between 5'-phosphoryl and 3'-hydroxyl groups in double-stranded DNA using NAD as a coenzyme and as the energy source for the reaction. It is essential for DNA replication and repair of damaged DNA. The polypeptide is DNA ligase (Cutibacterium acnes (strain DSM 16379 / KPA171202) (Propionibacterium acnes)).